The primary structure comprises 730 residues: Polyribonucleotide nucleotidyltransferase (730 aa).

Asp-489 and Asp-495 together coordinate Mg(2+). The KH domain occupies 556–615 (PRIEVMKIAVDKIREVIGSGGKVIREIVEKTGAKINIEDDGTIKIASASGDAIKAAINWI). The region spanning 625–693 (GQIYEGTVVK…ERGKTRLSMK (69 aa)) is the S1 motif domain. The disordered stretch occupies residues 700 to 730 (GEDLEAKAKAERDAARAAAPAATGDEAGAAE). A compositionally biased stretch (basic and acidic residues) spans 703–714 (LEAKAKAERDAA). Positions 715–730 (RAAAPAATGDEAGAAE) are enriched in low complexity.

It belongs to the polyribonucleotide nucleotidyltransferase family. It depends on Mg(2+) as a cofactor.

It is found in the cytoplasm. The catalysed reaction is RNA(n+1) + phosphate = RNA(n) + a ribonucleoside 5'-diphosphate. In terms of biological role, involved in mRNA degradation. Catalyzes the phosphorolysis of single-stranded polyribonucleotides processively in the 3'- to 5'-direction. The chain is Polyribonucleotide nucleotidyltransferase from Xanthobacter autotrophicus (strain ATCC BAA-1158 / Py2).